A 318-amino-acid chain; its full sequence is Formimidoylglutamase (318 aa).

Mn(2+) contacts are provided by histidine 130, aspartate 155, histidine 157, aspartate 159, aspartate 246, and aspartate 248.

Belongs to the arginase family. It depends on Mn(2+) as a cofactor.

The catalysed reaction is N-formimidoyl-L-glutamate + H2O = formamide + L-glutamate. Its pathway is amino-acid degradation; L-histidine degradation into L-glutamate; L-glutamate from N-formimidoyl-L-glutamate (hydrolase route): step 1/1. Catalyzes the conversion of N-formimidoyl-L-glutamate to L-glutamate and formamide. The protein is Formimidoylglutamase of Klebsiella pneumoniae subsp. pneumoniae (strain ATCC 700721 / MGH 78578).